A 278-amino-acid chain; its full sequence is Truncated FRIGIDA-like protein 1 (278 aa).

A coiled-coil region spans residues 1–36 (MTASETIATAINQIDEKKEKLKKAFDDLQAHRSLLS).

Belongs to the Frigida family.

In terms of biological role, truncated inactive FRIGIDA-like 1 protein. The polypeptide is Truncated FRIGIDA-like protein 1 (FRL1) (Arabidopsis thaliana (Mouse-ear cress)).